The sequence spans 48 residues: Glycine-rich RNA-binding protein 3 (48 aa).

In Populus euphratica (Euphrates poplar), this protein is Glycine-rich RNA-binding protein 3.